The following is a 206-amino-acid chain: Small ribosomal subunit protein uS4 (206 aa).

Residues 96–156 (GRLDNVVYRM…EKAKKQSRVK (61 aa)) enclose the S4 RNA-binding domain.

The protein belongs to the universal ribosomal protein uS4 family. In terms of assembly, part of the 30S ribosomal subunit. Contacts protein S5. The interaction surface between S4 and S5 is involved in control of translational fidelity.

One of the primary rRNA binding proteins, it binds directly to 16S rRNA where it nucleates assembly of the body of the 30S subunit. In terms of biological role, with S5 and S12 plays an important role in translational accuracy. In Serratia proteamaculans (strain 568), this protein is Small ribosomal subunit protein uS4.